Reading from the N-terminus, the 599-residue chain is Endo-1,4-beta-xylanase B (599 aa).

The N-terminal stretch at 1-37 (MTISASDYRHPGNFLKRTTALLCVGTALTALAFNASA) is a signal peptide. A CBM2 domain is found at 38-136 (ACTYTIDSEW…TVTGAACNSA (99 aa)). A disulfide bridge links cysteine 39 with cysteine 133. Residues 163–289 (LLQEAQAGFC…LPNIDSLSVV (127 aa)) enclose the CBM6 domain. The region spanning 315–595 (SSSAASAKKF…RPAMTWLINN (281 aa)) is the GH10 domain. Glutamate 431 serves as the catalytic Proton donor. The active-site Nucleophile is the glutamate 530.

Belongs to the glycosyl hydrolase 10 (cellulase F) family.

It catalyses the reaction Endohydrolysis of (1-&gt;4)-beta-D-xylosidic linkages in xylans.. The protein operates within glycan metabolism; hemicellulose degradation. Xylanase B contributes to hydrolyze hemicellulose, the major component of plant cell-walls. The sequence is that of Endo-1,4-beta-xylanase B (xynB) from Cellvibrio japonicus (strain Ueda107) (Pseudomonas fluorescens subsp. cellulosa).